Consider the following 84-residue polypeptide: Probable cyclin-dependent kinases regulatory subunit (84 aa).

The protein belongs to the CKS family. Monomer in solution; may form a homohexamer that can probably bind six kinase subunits.

Binds to the catalytic subunit of the cyclin dependent kinases and is essential for their biological function. In Physarum polycephalum (Slime mold), this protein is Probable cyclin-dependent kinases regulatory subunit.